The sequence spans 2645 residues: Non-reducing polyketide synthase AC (2645 aa).

An N-terminal acylcarrier protein transacylase domain (SAT) region spans residues 73–2366 (ALQNLNEWLK…TDIVHNAWPM (2294 aa)). Histidine 260 acts as the Proton donor/acceptor; for transacylase activity in catalysis. One can recognise a Ketosynthase family 3 (KS3) domain in the interval 416–834 (DDKIAVIGMA…GSNSSLVVTE (419 aa)). Residues cysteine 583, histidine 718, and histidine 757 each act as for beta-ketoacyl synthase activity in the active site. The segment at 943–1252 (CFGGQISTYI…HAVSITTDKS (310 aa)) is malonyl-CoA:ACP transacylase (MAT) domain. An N-terminal hotdog fold region spans residues 1324 to 1457 (SKGFTSFAGY…GVCSFCSATD (134 aa)). The 314-residue stretch at 1324-1637 (SKGFTSFAGY…YNKVPLPVMR (314 aa)) folds into the PKS/mFAS DH domain. The segment at 1330–1641 (FAGYIDGNQR…PLPVMRGILG (312 aa)) is product template (PT) domain. Histidine 1359 serves as the catalytic Proton acceptor; for dehydratase activity. The interval 1487–1637 (NIMQGTANIY…YNKVPLPVMR (151 aa)) is C-terminal hotdog fold. Aspartate 1542 (proton donor; for dehydratase activity) is an active-site residue. A compositionally biased stretch (polar residues) spans 1684–1696 (NGTTGTENPQIKS). Positions 1684 to 1716 (NGTTGTENPQIKSKTNKVKKVPTRKSGGSDLET) are disordered. The segment covering 1697–1706 (KTNKVKKVPT) has biased composition (basic residues). The region spanning 1711 to 1788 (GSDLETPAKT…SLVKYIREIR (78 aa)) is the Carrier domain. An O-(pantetheine 4'-phosphoryl)serine modification is found at serine 1748. The span at 1794–1805 (QNVDDSESESEE) shows a compositional bias: acidic residues. Residues 1794–1816 (QNVDDSESESEELQQQATPIDSA) are disordered. Residue tyrosine 2009 is the For methyltransferase activity of the active site. The segment at 2023–2197 (EVFVEKIGSS…SVGYGHVDWT (175 aa)) is methyltransferase (CMeT) domain. The segment at 2269-2573 (CVLITGATGS…NIIPFYDWVQ (305 aa)) is NADPH-binding (R) domain.

It participates in mycotoxin biosynthesis. Its function is as follows. Non-reducing polyketide synthase; part of the gene cluster that mediates the biosynthesis of the selective antifungal agent ascochitine, an o-quinone methide that plays a possible protective role against other microbial competitors in nature and is considered to be important for pathogenicity of legume-associated Didymella species. The pathway probably begins with the synthesis of a keto-aldehyde intermediate by the ascochitine non-reducing polyketide synthase pksAC from successive condensations of 4 malonyl-CoA units, presumably with a simple acetyl-CoA starter unit. Release of the keto-aldehyde intermediate is consistent with the presence of the C-terminal reductive release domain. The HR-PKS (orf7) probably makes a diketide starter unit which is passed to the non-reducing polyketide synthase pksAC for further extension, producing ascochital and ascochitine. The aldehyde dehydrogenase (orf1), the 2-oxoglutarate-dependent dioxygenase (orf3) and the dehydrogenase (orf9) are probably involved in subsequent oxidations of methyl groups to the carboxylic acid of the heterocyclic ring. The ascochitine gene cluster also includes a gene encoding a short peptide (orf2) that is often found in secondary metabolite gene clusters and which function has still to be determined. The sequence is that of Non-reducing polyketide synthase AC from Didymella fabae (Leaf and pod spot disease fungus).